Here is a 1085-residue protein sequence, read N- to C-terminus: DNA-directed RNA polymerase subunit beta (1085 aa).

The protein belongs to the RNA polymerase beta chain family. In terms of assembly, in plastids the minimal PEP RNA polymerase catalytic core is composed of four subunits: alpha, beta, beta', and beta''. When a (nuclear-encoded) sigma factor is associated with the core the holoenzyme is formed, which can initiate transcription.

It is found in the plastid. Its subcellular location is the chloroplast. It carries out the reaction RNA(n) + a ribonucleoside 5'-triphosphate = RNA(n+1) + diphosphate. DNA-dependent RNA polymerase catalyzes the transcription of DNA into RNA using the four ribonucleoside triphosphates as substrates. The chain is DNA-directed RNA polymerase subunit beta from Physcomitrium patens (Spreading-leaved earth moss).